A 257-amino-acid polypeptide reads, in one-letter code: Ubiquinone biosynthesis O-methyltransferase (257 aa).

Residues Arg43, Gly77, Asp98, and Met144 each contribute to the S-adenosyl-L-methionine site.

The protein belongs to the methyltransferase superfamily. UbiG/COQ3 family.

The catalysed reaction is a 3-demethylubiquinol + S-adenosyl-L-methionine = a ubiquinol + S-adenosyl-L-homocysteine + H(+). It catalyses the reaction a 3-(all-trans-polyprenyl)benzene-1,2-diol + S-adenosyl-L-methionine = a 2-methoxy-6-(all-trans-polyprenyl)phenol + S-adenosyl-L-homocysteine + H(+). It participates in cofactor biosynthesis; ubiquinone biosynthesis. O-methyltransferase that catalyzes the 2 O-methylation steps in the ubiquinone biosynthetic pathway. In Psychrobacter arcticus (strain DSM 17307 / VKM B-2377 / 273-4), this protein is Ubiquinone biosynthesis O-methyltransferase.